The chain runs to 339 residues: Diguanylate cyclase VdcA (339 aa).

Residues 206–339 form the GGDEF domain; that stretch reads QQVSLIMLDI…NLGRNRVMPL (134 aa). Asp-214 contacts Mg(2+). Residues Asn-222 and Asp-231 each coordinate substrate. Glu-257 contacts Mg(2+). Catalysis depends on Glu-257, which acts as the Proton acceptor.

It depends on Mg(2+) as a cofactor.

It carries out the reaction 2 GTP = 3',3'-c-di-GMP + 2 diphosphate. The protein operates within purine metabolism; 3',5'-cyclic di-GMP biosynthesis. Its function is as follows. Diguanylate cyclase (DGC) that catalyzes the synthesis of cyclic diguanylate (c-di-GMP) via the condensation of 2 GTP molecules. Is involved in the modulation of intracellular c-di-GMP levels. Cyclic-di-GMP is a second messenger which positively regulates biofilm formation and negatively regulates virulence in V.cholerae, and is proposed to play an important role in the transition from persistence in the environment to survival in the host. Overexpression of vdcA results in increased biofilm formation, and reduced motility and virulence. In Vibrio cholerae serotype O1 (strain ATCC 39315 / El Tor Inaba N16961), this protein is Diguanylate cyclase VdcA (vdcA).